A 532-amino-acid chain; its full sequence is Invertase 1 (532 aa).

An N-terminal signal peptide occupies residues Met-1–Ala-19. N-linked (GlcNAc...) asparagine glycosylation occurs at Asn-23. Substrate-binding positions include Trp-39–Asp-42 and Gln-60. Asp-42 is a catalytic residue. Residue Asn-64 is glycosylated (N-linked (GlcNAc...) asparagine). Position 102 to 103 (Tyr-102 to Ser-103) interacts with substrate. Asn-111, Asn-112, Asn-118, and Asn-165 each carry an N-linked (GlcNAc...) asparagine glycan. Substrate contacts are provided by residues Arg-170–Asp-171 and Glu-223. Residue Asn-275 is glycosylated (N-linked (GlcNAc...) asparagine). Trp-311 lines the substrate pocket. N-linked (GlcNAc...) asparagine glycans are attached at residues Asn-356, Asn-369, Asn-384, Asn-398, and Asn-512.

This sequence belongs to the glycosyl hydrolase 32 family. In terms of processing, isoform Secreted is glycosylated. Isoform Intracellular is not glycosylated.

It is found in the cytoplasm. The protein localises to the secreted. It catalyses the reaction Hydrolysis of terminal non-reducing beta-D-fructofuranoside residues in beta-D-fructofuranosides.. The protein is Invertase 1 (SUC1) of Saccharomyces cerevisiae (Baker's yeast).